The following is a 224-amino-acid chain: Phosphoglycolate phosphatase (224 aa).

The active-site Nucleophile is Asp10. Mg(2+) contacts are provided by Asp10, Asp12, and Asp176.

It belongs to the HAD-like hydrolase superfamily. CbbY/CbbZ/Gph/YieH family. Requires Mg(2+) as cofactor.

It carries out the reaction 2-phosphoglycolate + H2O = glycolate + phosphate. It functions in the pathway organic acid metabolism; glycolate biosynthesis; glycolate from 2-phosphoglycolate: step 1/1. In terms of biological role, specifically catalyzes the dephosphorylation of 2-phosphoglycolate. Is involved in the dissimilation of the intracellular 2-phosphoglycolate formed during the DNA repair of 3'-phosphoglycolate ends, a major class of DNA lesions induced by oxidative stress. The polypeptide is Phosphoglycolate phosphatase (Pasteurella multocida (strain Pm70)).